The sequence spans 281 residues: Large ribosomal subunit protein uL2 (281 aa).

The interval 213-281 (RNRHKGIRPT…LIIRRRKESK (69 aa)) is disordered.

It belongs to the universal ribosomal protein uL2 family. Part of the 50S ribosomal subunit. Forms a bridge to the 30S subunit in the 70S ribosome.

One of the primary rRNA binding proteins. Required for association of the 30S and 50S subunits to form the 70S ribosome, for tRNA binding and peptide bond formation. It has been suggested to have peptidyltransferase activity; this is somewhat controversial. Makes several contacts with the 16S rRNA in the 70S ribosome. The chain is Large ribosomal subunit protein uL2 from Mycoplasmopsis pulmonis (strain UAB CTIP) (Mycoplasma pulmonis).